The following is an 88-amino-acid chain: DNA-directed RNA polymerase subunit omega (88 aa).

Belongs to the RNA polymerase subunit omega family. The RNAP catalytic core consists of 2 alpha, 1 beta, 1 beta' and 1 omega subunit. When a sigma factor is associated with the core the holoenzyme is formed, which can initiate transcription.

The catalysed reaction is RNA(n) + a ribonucleoside 5'-triphosphate = RNA(n+1) + diphosphate. Functionally, promotes RNA polymerase assembly. Latches the N- and C-terminal regions of the beta' subunit thereby facilitating its interaction with the beta and alpha subunits. This Anaeromyxobacter sp. (strain Fw109-5) protein is DNA-directed RNA polymerase subunit omega.